The chain runs to 258 residues: Isoprenyl transferase (258 aa).

Residue D38 is part of the active site. Residue D38 participates in Mg(2+) binding. Substrate-binding positions include 39 to 42, W43, R51, H55, and 83 to 85; these read GNGR and STE. The Proton acceptor role is filled by N86. Substrate contacts are provided by residues W87, R89, R206, and 212 to 214; that span reads RIS. E225 provides a ligand contact to Mg(2+).

The protein belongs to the UPP synthase family. Homodimer. Mg(2+) serves as cofactor.

Catalyzes the condensation of isopentenyl diphosphate (IPP) with allylic pyrophosphates generating different type of terpenoids. This is Isoprenyl transferase from Bacillus cereus (strain ATCC 14579 / DSM 31 / CCUG 7414 / JCM 2152 / NBRC 15305 / NCIMB 9373 / NCTC 2599 / NRRL B-3711).